We begin with the raw amino-acid sequence, 151 residues long: Cell division protein SepF (151 aa).

The segment at 31–53 is disordered; it reads EEVEEPRRRSRTGVKQERETGQN.

Belongs to the SepF family. In terms of assembly, homodimer. Interacts with FtsZ.

It localises to the cytoplasm. Functionally, cell division protein that is part of the divisome complex and is recruited early to the Z-ring. Probably stimulates Z-ring formation, perhaps through the cross-linking of FtsZ protofilaments. Its function overlaps with FtsA. The chain is Cell division protein SepF from Halalkalibacterium halodurans (strain ATCC BAA-125 / DSM 18197 / FERM 7344 / JCM 9153 / C-125) (Bacillus halodurans).